Reading from the N-terminus, the 309-residue chain is L-aminoadipate-semialdehyde dehydrogenase-phosphopantetheinyl transferase (309 aa).

Residues Arg47, 86–91, and 108–111 each bind CoA; these read RTSKGK and NISH. Mg(2+)-binding residues include Asp129 and Glu181. 181–185 provides a ligand contact to CoA; that stretch reads ESFIK.

The protein belongs to the P-Pant transferase superfamily. AcpS family. In terms of assembly, monomer. The cofactor is Mg(2+).

The protein localises to the cytoplasm. It is found in the cytosol. The enzyme catalyses apo-[ACP] + CoA = holo-[ACP] + adenosine 3',5'-bisphosphate + H(+). It carries out the reaction apo-[ACP] + acetyl-CoA = acetyl-[ACP] + adenosine 3',5'-bisphosphate + H(+). In terms of biological role, catalyzes the post-translational modification of target proteins by phosphopantetheine. Can transfer the 4'-phosphopantetheine moiety from coenzyme A, regardless of whether the CoA is presented in the free thiol form or as an acetyl thioester, to a serine residue of a broad range of acceptors including the acyl carrier domain of FASN. In Mus musculus (Mouse), this protein is L-aminoadipate-semialdehyde dehydrogenase-phosphopantetheinyl transferase (Aasdhppt).